A 313-amino-acid chain; its full sequence is Protein FixB (313 aa).

FAD is bound at residue 255–283 (LYLAVGISGQIQHMVGANASQTIFAINKD).

Belongs to the ETF alpha-subunit/FixB family. As to quaternary structure, heterodimer of FixA and FixB.

The protein operates within amine and polyamine metabolism; carnitine metabolism. Required for anaerobic carnitine reduction. May bring reductant to CaiA. The sequence is that of Protein FixB from Escherichia coli (strain K12 / MC4100 / BW2952).